The sequence spans 431 residues: Enolase (431 aa).

Gln-167 is a (2R)-2-phosphoglycerate binding site. Residue Glu-209 is the Proton donor of the active site. Mg(2+) is bound by residues Asp-246, Glu-289, and Asp-316. The (2R)-2-phosphoglycerate site is built by Lys-341, Arg-370, Ser-371, and Lys-392. Lys-341 serves as the catalytic Proton acceptor.

This sequence belongs to the enolase family. As to quaternary structure, component of the RNA degradosome, a multiprotein complex involved in RNA processing and mRNA degradation. It depends on Mg(2+) as a cofactor.

The protein resides in the cytoplasm. The protein localises to the secreted. Its subcellular location is the cell surface. It catalyses the reaction (2R)-2-phosphoglycerate = phosphoenolpyruvate + H2O. It functions in the pathway carbohydrate degradation; glycolysis; pyruvate from D-glyceraldehyde 3-phosphate: step 4/5. In terms of biological role, catalyzes the reversible conversion of 2-phosphoglycerate (2-PG) into phosphoenolpyruvate (PEP). It is essential for the degradation of carbohydrates via glycolysis. The chain is Enolase from Shewanella halifaxensis (strain HAW-EB4).